A 92-amino-acid chain; its full sequence is Small ribosomal subunit protein uS19 (92 aa).

This sequence belongs to the universal ribosomal protein uS19 family.

In terms of biological role, protein S19 forms a complex with S13 that binds strongly to the 16S ribosomal RNA. This chain is Small ribosomal subunit protein uS19, found in Borreliella afzelii (strain PKo) (Borrelia afzelii).